A 23-amino-acid polypeptide reads, in one-letter code: Septenin 2a (23 aa).

In terms of tissue distribution, expressed in skin glands.

The protein resides in the secreted. Functionally, may act as an antimicrobial peptide. The sequence is that of Septenin 2a from Osteopilus septentrionalis (Cuban treefrog).